The following is a 377-amino-acid chain: Histidinol-phosphate aminotransferase (377 aa).

The residue at position 232 (Lys232) is an N6-(pyridoxal phosphate)lysine.

Belongs to the class-II pyridoxal-phosphate-dependent aminotransferase family. Histidinol-phosphate aminotransferase subfamily. Homodimer. Pyridoxal 5'-phosphate serves as cofactor.

It carries out the reaction L-histidinol phosphate + 2-oxoglutarate = 3-(imidazol-4-yl)-2-oxopropyl phosphate + L-glutamate. It participates in amino-acid biosynthesis; L-histidine biosynthesis; L-histidine from 5-phospho-alpha-D-ribose 1-diphosphate: step 7/9. The sequence is that of Histidinol-phosphate aminotransferase from Mycobacterium sp. (strain JLS).